Reading from the N-terminus, the 410-residue chain is Elongation factor Tu, chloroplastic (410 aa).

The region spanning Lys-10–Glu-215 is the tr-type G domain. The G1 stretch occupies residues Gly-19 to Thr-26. Gly-19–Thr-26 lines the GTP pocket. Thr-26 is a binding site for Mg(2+). Residues Gly-61 to Asn-65 form a G2 region. Residues Asp-82–Gly-85 form a G3 region. Residues Asp-82–His-86 and Asn-137–Asp-140 contribute to the GTP site. The interval Asn-137–Asp-140 is G4. Residues Ser-175 to Leu-177 are G5.

It belongs to the TRAFAC class translation factor GTPase superfamily. Classic translation factor GTPase family. EF-Tu/EF-1A subfamily.

The protein resides in the plastid. Its subcellular location is the chloroplast. It catalyses the reaction GTP + H2O = GDP + phosphate + H(+). Its function is as follows. GTP hydrolase that promotes the GTP-dependent binding of aminoacyl-tRNA to the A-site of ribosomes during protein biosynthesis. The sequence is that of Elongation factor Tu, chloroplastic (tufA) from Oltmannsiellopsis viridis (Marine flagellate).